Here is a 794-residue protein sequence, read N- to C-terminus: Sucrose synthase (794 aa).

The segment at 263 to 742 (MISRLLILSP…ALDRVASRYT (480 aa)) is GT-B glycosyltransferase.

It belongs to the glycosyltransferase 1 family. As to quaternary structure, homotetramer.

The catalysed reaction is an NDP-alpha-D-glucose + D-fructose = a ribonucleoside 5'-diphosphate + sucrose + H(+). The enzyme catalyses ADP-alpha-D-glucose + D-fructose = sucrose + ADP + H(+). Inhibited by GDP over 10 mM and by over 2 mM MgCl(2). Functionally, catalyzes the reversible conversion of sucrose and a nucleotide disphosphate (NDP) into fructose and NDP-glucose; although the reaction is freely reversible in vitro, the physiological reaction seems to be sucrose cleavage. Unlike characterized plant enzymes prefers ADP as a cosubstrate, whereas plants prefer UDP. The KM for sucrose is 8-fold lower in the presence of ADP than UDP. Its preference for ADP over UDP suggests it may directly link sucrose and glycogen metabolism. The polypeptide is Sucrose synthase (ss2) (Nitrosomonas europaea (strain ATCC 19718 / CIP 103999 / KCTC 2705 / NBRC 14298)).